A 529-amino-acid polypeptide reads, in one-letter code: Bifunctional purine biosynthesis protein PurH (529 aa).

Residues 1–148 enclose the MGS-like domain; the sequence is MQQRRPVRRA…KNHKDVAIVV (148 aa). At Lys287 the chain carries N6-acetyllysine.

Belongs to the PurH family.

The catalysed reaction is (6R)-10-formyltetrahydrofolate + 5-amino-1-(5-phospho-beta-D-ribosyl)imidazole-4-carboxamide = 5-formamido-1-(5-phospho-D-ribosyl)imidazole-4-carboxamide + (6S)-5,6,7,8-tetrahydrofolate. It carries out the reaction IMP + H2O = 5-formamido-1-(5-phospho-D-ribosyl)imidazole-4-carboxamide. The protein operates within purine metabolism; IMP biosynthesis via de novo pathway; 5-formamido-1-(5-phospho-D-ribosyl)imidazole-4-carboxamide from 5-amino-1-(5-phospho-D-ribosyl)imidazole-4-carboxamide (10-formyl THF route): step 1/1. Its pathway is purine metabolism; IMP biosynthesis via de novo pathway; IMP from 5-formamido-1-(5-phospho-D-ribosyl)imidazole-4-carboxamide: step 1/1. The polypeptide is Bifunctional purine biosynthesis protein PurH (Escherichia coli O17:K52:H18 (strain UMN026 / ExPEC)).